A 308-amino-acid polypeptide reads, in one-letter code: Acetaldehyde dehydrogenase 2 (308 aa).

12–15 (SGNI) lines the NAD(+) pocket. Cys127 acts as the Acyl-thioester intermediate in catalysis. Residues 162–170 (SAGPGTRAN) and Asn281 each bind NAD(+).

The protein belongs to the acetaldehyde dehydrogenase family.

It carries out the reaction acetaldehyde + NAD(+) + CoA = acetyl-CoA + NADH + H(+). In Mycobacterium marinum (strain ATCC BAA-535 / M), this protein is Acetaldehyde dehydrogenase 2.